The sequence spans 305 residues: J domain-containing protein 1 (305 aa).

The J domain occupies threonine 91–alanine 163. Residues tryptophan 212–isoleucine 232 form a helical membrane-spanning segment.

It belongs to the DnaJ family.

It localises to the mitochondrion membrane. Its function is as follows. Probable chaperone. This Eremothecium gossypii (strain ATCC 10895 / CBS 109.51 / FGSC 9923 / NRRL Y-1056) (Yeast) protein is J domain-containing protein 1 (JID1).